A 346-amino-acid polypeptide reads, in one-letter code: Peroxidase 19 (346 aa).

The signal sequence occupies residues 1 to 31 (MHVISLSLSSIFFFLFLTSTILISPVQPTTS). 4 disulfides stabilise this stretch: C51–C134, C84–C89, C140–C342, and C219–C251. H82 functions as the Proton acceptor in the catalytic mechanism. Ca(2+) contacts are provided by D83, V86, G88, D90, and S92. P182 provides a ligand contact to substrate. A glycan (N-linked (GlcNAc...) asparagine) is linked at N185. H212 is a binding site for heme b. T213 contacts Ca(2+). The Ca(2+) site is built by D265, T268, and D273.

Belongs to the peroxidase family. Classical plant (class III) peroxidase subfamily. The cofactor is heme b. Requires Ca(2+) as cofactor.

The protein localises to the secreted. The enzyme catalyses 2 a phenolic donor + H2O2 = 2 a phenolic radical donor + 2 H2O. Functionally, removal of H(2)O(2), oxidation of toxic reductants, biosynthesis and degradation of lignin, suberization, auxin catabolism, response to environmental stresses such as wounding, pathogen attack and oxidative stress. These functions might be dependent on each isozyme/isoform in each plant tissue. The chain is Peroxidase 19 (PER19) from Arabidopsis thaliana (Mouse-ear cress).